The sequence spans 236 residues: 2-phospho-L-lactate guanylyltransferase (236 aa).

It belongs to the CofC family. In terms of assembly, homodimer.

The enzyme catalyses (2S)-2-phospholactate + GTP + H(+) = (2S)-lactyl-2-diphospho-5'-guanosine + diphosphate. Its pathway is cofactor biosynthesis; coenzyme F420 biosynthesis. Its function is as follows. Guanylyltransferase that catalyzes the activation of (2S)-2-phospholactate (2-PL) as (2S)-lactyl-2-diphospho-5'-guanosine, via the condensation of 2-PL with GTP. It is involved in the biosynthesis of coenzyme F420, a hydride carrier cofactor. This Natrialba magadii (strain ATCC 43099 / DSM 3394 / CCM 3739 / CIP 104546 / IAM 13178 / JCM 8861 / NBRC 102185 / NCIMB 2190 / MS3) (Natronobacterium magadii) protein is 2-phospho-L-lactate guanylyltransferase.